The primary structure comprises 596 residues: MSTSPAARPTSNAHLLGWVDEMAKLCKPDRVYWCDGSEAEKKRLTDDAVAAKVLIPLDQQKWPGCHYHHSNSSDVARVEHLTFICTPTKEQAGPTNNWMEPKEAYRKLGAIFDGSMKGRTMYVVPYVMGPSTSPFAKVGIEITDSVYVALNMGIMARMGKVALDRLGDSDEFNRGLHSVADCNPERRFICHFPQDNTIWSVGSGYGGNALLGKKCLALRIASYLAKNEGWLAEHMLILEAESPTGEKQYVAAAFPSACGKTNFAMMIPPAAFPGWKIRTVGDDISWMRVGEDGRLWAVNPENGYFGVAPGTNRKTNPNAMDSVRKDTIFTNVARTPDGDIWWEGMDHEAPAELIDWKGQPWKKGSTEKAAHPNSRFTAPAKNNPAISPLVDDPKGVPISAIIFGGRRSTTVPLVLEAFNWTHGVYLGSTMGSETTAAATGQVGVVRRDPMAMLPFIGYDCGSYLQHWLDMQSRIPNPPKIFLVNWFRKSAEGKFLWPGYGDNMRVLKWMLDRAAGRAPAKETLLGYTPGDSGLDLHGLDVSKDAIAAATQIDLGEWEQELESQSEWFEKLGKTLPRPLALQRELLLERVRAARKVK.

Residues arginine 77 and tyrosine 205–glycine 207 each bind substrate. Mn(2+) contacts are provided by lysine 214 and histidine 234. Serine 256 contacts substrate. Alanine 257 to asparagine 262 lines the GTP pocket. Cysteine 258 is a catalytic residue. Aspartate 283 lines the Mn(2+) pocket. The segment at lysine 362–proline 388 is disordered. Residue asparagine 373–arginine 375 participates in substrate binding. Residues arginine 375, arginine 406, and tyrosine 499 to asparagine 502 each bind GTP.

This sequence belongs to the phosphoenolpyruvate carboxykinase [GTP] family. In terms of assembly, monomer. The cofactor is Mn(2+).

The protein localises to the cytoplasm. The enzyme catalyses oxaloacetate + GTP = phosphoenolpyruvate + GDP + CO2. It functions in the pathway carbohydrate biosynthesis; gluconeogenesis. Its function is as follows. Catalyzes the conversion of oxaloacetate (OAA) to phosphoenolpyruvate (PEP), the rate-limiting step in the metabolic pathway that produces glucose from lactate and other precursors derived from the citric acid cycle. This is Phosphoenolpyruvate carboxykinase [GTP] from Anaeromyxobacter dehalogenans (strain 2CP-1 / ATCC BAA-258).